We begin with the raw amino-acid sequence, 370 residues long: Dual-specificity RNA methyltransferase RlmN (370 aa).

E93 serves as the catalytic Proton acceptor. One can recognise a Radical SAM core domain in the interval 99-331 (DRKRGTLCVS…TRVRRTRGDD (233 aa)). A disulfide bridge connects residues C106 and C336. [4Fe-4S] cluster-binding residues include C113, C117, and C120. S-adenosyl-L-methionine contacts are provided by residues 162-163 (GE), S194, 216-218 (SLH), and N293. C336 functions as the S-methylcysteine intermediate in the catalytic mechanism.

Belongs to the radical SAM superfamily. RlmN family. The cofactor is [4Fe-4S] cluster.

Its subcellular location is the cytoplasm. The enzyme catalyses adenosine(2503) in 23S rRNA + 2 reduced [2Fe-2S]-[ferredoxin] + 2 S-adenosyl-L-methionine = 2-methyladenosine(2503) in 23S rRNA + 5'-deoxyadenosine + L-methionine + 2 oxidized [2Fe-2S]-[ferredoxin] + S-adenosyl-L-homocysteine. It catalyses the reaction adenosine(37) in tRNA + 2 reduced [2Fe-2S]-[ferredoxin] + 2 S-adenosyl-L-methionine = 2-methyladenosine(37) in tRNA + 5'-deoxyadenosine + L-methionine + 2 oxidized [2Fe-2S]-[ferredoxin] + S-adenosyl-L-homocysteine. Functionally, specifically methylates position 2 of adenine 2503 in 23S rRNA and position 2 of adenine 37 in tRNAs. m2A2503 modification seems to play a crucial role in the proofreading step occurring at the peptidyl transferase center and thus would serve to optimize ribosomal fidelity. The polypeptide is Dual-specificity RNA methyltransferase RlmN (Coxiella burnetii (strain RSA 493 / Nine Mile phase I)).